The primary structure comprises 134 residues: Profilin-2 (134 aa).

Cys13 and Cys118 are joined by a disulfide. An Involved in PIP2 interaction motif is present at residues Ala84–Thr100. Thr114 is modified (phosphothreonine).

This sequence belongs to the profilin family. Occurs in many kinds of cells as a complex with monomeric actin in a 1:1 ratio. Post-translationally, phosphorylated by MAP kinases.

It localises to the cytoplasm. Its subcellular location is the cytoskeleton. In terms of biological role, binds to actin and affects the structure of the cytoskeleton. At high concentrations, profilin prevents the polymerization of actin, whereas it enhances it at low concentrations. This is Profilin-2 from Olea europaea (Common olive).